A 310-amino-acid chain; its full sequence is HPr kinase/phosphorylase (310 aa).

Active-site residues include His138 and Lys159. 153–160 (GGSGVGKS) contacts ATP. A Mg(2+)-binding site is contributed by Ser160. Asp177 acts as the Proton acceptor; for phosphorylation activity. Proton donor; for dephosphorylation activity in catalysis. The tract at residues 201–210 (LEIRGLGIIN) is important for the catalytic mechanism of both phosphorylation and dephosphorylation. A Mg(2+)-binding site is contributed by Glu202. Residue Arg243 is part of the active site. The tract at residues 264–269 (PVRPGR) is important for the catalytic mechanism of dephosphorylation.

This sequence belongs to the HPrK/P family. As to quaternary structure, homohexamer. The cofactor is Mg(2+).

The enzyme catalyses [HPr protein]-L-serine + ATP = [HPr protein]-O-phospho-L-serine + ADP + H(+). It carries out the reaction [HPr protein]-O-phospho-L-serine + phosphate + H(+) = [HPr protein]-L-serine + diphosphate. Its function is as follows. Catalyzes the ATP- as well as the pyrophosphate-dependent phosphorylation of a specific serine residue in HPr, a phosphocarrier protein of the phosphoenolpyruvate-dependent sugar phosphotransferase system (PTS). HprK/P also catalyzes the pyrophosphate-producing, inorganic phosphate-dependent dephosphorylation (phosphorolysis) of seryl-phosphorylated HPr (P-Ser-HPr). The two antagonistic activities of HprK/P are regulated by several intracellular metabolites, which change their concentration in response to the absence or presence of rapidly metabolisable carbon sources (glucose, fructose, etc.) in the growth medium. Also phosphorylates/dephosphorylates the HPr-like catabolite repression protein crh on a specific serine residue. Therefore, by controlling the phosphorylation state of HPr and crh, HPrK/P is a sensor enzyme that plays a major role in the regulation of carbon metabolism and sugar transport: it mediates carbon catabolite repression (CCR), and regulates PTS-catalyzed carbohydrate uptake and inducer exclusion. The chain is HPr kinase/phosphorylase from Shouchella clausii (strain KSM-K16) (Alkalihalobacillus clausii).